The primary structure comprises 472 residues: Chromosomal replication initiator protein DnaA (472 aa).

The domain I, interacts with DnaA modulators stretch occupies residues 1–80 (MDTKQIWFTT…YQVNVRVIIS (80 aa)). The segment at 80–130 (SSATPAPSEPVAVTPSEPSPTTEVAEPSFASFNQAAPMLNQLPLGDPNRSS) is domain II. The tract at residues 131–347 (VLNPRYTFSS…GCLNRVIAYA (217 aa)) is domain III, AAA+ region. The ATP site is built by G175, G177, K178, and T179. The interval 348–472 (NLNRTPVTVE…RQRLYGENAR (125 aa)) is domain IV, binds dsDNA.

This sequence belongs to the DnaA family. In terms of assembly, oligomerizes as a right-handed, spiral filament on DNA at oriC.

The protein resides in the cytoplasm. Functionally, plays an essential role in the initiation and regulation of chromosomal replication. ATP-DnaA binds to the origin of replication (oriC) to initiate formation of the DNA replication initiation complex once per cell cycle. Binds the DnaA box (a 9 base pair repeat at the origin) and separates the double-stranded (ds)DNA. Forms a right-handed helical filament on oriC DNA; dsDNA binds to the exterior of the filament while single-stranded (ss)DNA is stabiized in the filament's interior. The ATP-DnaA-oriC complex binds and stabilizes one strand of the AT-rich DNA unwinding element (DUE), permitting loading of DNA polymerase. After initiation quickly degrades to an ADP-DnaA complex that is not apt for DNA replication. Binds acidic phospholipids. This chain is Chromosomal replication initiator protein DnaA, found in Herpetosiphon aurantiacus (strain ATCC 23779 / DSM 785 / 114-95).